Consider the following 532-residue polypeptide: Protein kinase domain-containing protein ppk9 (532 aa).

A Protein kinase domain is found at 23-274 (WLLGRTLGQG…VAEIMQHPWF (252 aa)). Residues 29-37 (LGQGNLAKV) and lysine 52 contribute to the ATP site. Catalysis depends on aspartate 145, which acts as the Proton acceptor. The span at 316 to 346 (PSSSVGQIPQPTDHSALSPSKPMSISGTESP) shows a compositional bias: polar residues. Positions 316 to 349 (PSSSVGQIPQPTDHSALSPSKPMSISGTESPNPD) are disordered.

The protein resides in the cytoplasm. Its subcellular location is the nucleus. It localises to the cytoskeleton. It is found in the microtubule organizing center. The protein localises to the spindle pole body. The protein is Protein kinase domain-containing protein ppk9 (ppk9) of Schizosaccharomyces pombe (strain 972 / ATCC 24843) (Fission yeast).